We begin with the raw amino-acid sequence, 129 residues long: Large ribosomal subunit protein bL19 (129 aa).

It belongs to the bacterial ribosomal protein bL19 family.

Functionally, this protein is located at the 30S-50S ribosomal subunit interface and may play a role in the structure and function of the aminoacyl-tRNA binding site. The sequence is that of Large ribosomal subunit protein bL19 from Bordetella avium (strain 197N).